Consider the following 71-residue polypeptide: Omega-conotoxin SO-3 (71 aa).

A signal peptide spans 1-22; it reads MKLTCMVIVAVLLLTACQLITA. Positions 23–45 are excised as a propeptide; it reads DDSRGTQKHRTLRSKTKLSMSTR. Cystine bridges form between C46-C61, C53-C65, and C60-C70. C70 carries the post-translational modification Cysteine amide.

Belongs to the conotoxin O1 superfamily. Expressed by the venom duct.

It is found in the secreted. Omega-conotoxins act at presynaptic membranes, they bind and block voltage-gated calcium channels (Cav). This peptide selectively targets Cav2.2/CACNA1B (IC(50)=160 nM) voltage-gated calcium channels. When tested in mammals, this toxin displays an analgesic potency similar to MVIIA in a range of acute and chronic pain models in rodents, but has less adverse effects (tremor, diminution of spontaneous locomotor activity and bad coordinated locomotion) compared with identical dosages of MVIIA injected intrathecally. This chain is Omega-conotoxin SO-3, found in Conus striatus (Striated cone).